The sequence spans 177 residues: MSRIAKYPVELPKGVEASIQPDQITVKGPLGILVQSLTGDVNVAQEDGKLTFVVANDSRHANAMSGTLRALVANMVTGVSKGFERKLNLVGVGYRAQIQGDAVKLQLGFSHDVVHQLPAGVKAECPTQTEIVIKGPNKQVVGQVAAEIRKYREPEPYKGKGVRYADERVVIKETKKK.

The protein belongs to the universal ribosomal protein uL6 family. As to quaternary structure, part of the 50S ribosomal subunit.

Its function is as follows. This protein binds to the 23S rRNA, and is important in its secondary structure. It is located near the subunit interface in the base of the L7/L12 stalk, and near the tRNA binding site of the peptidyltransferase center. The sequence is that of Large ribosomal subunit protein uL6 from Bordetella pertussis (strain Tohama I / ATCC BAA-589 / NCTC 13251).